Consider the following 337-residue polypeptide: Putative NAC domain-containing protein 94 (337 aa).

The NAC domain occupies valine 20–lysine 191.

The protein resides in the nucleus. The polypeptide is Putative NAC domain-containing protein 94 (ANAC094) (Arabidopsis thaliana (Mouse-ear cress)).